The primary structure comprises 216 residues: FMN-dependent NADH:quinone oxidoreductase 2 (216 aa).

Residues serine 9, 15–17 (SVS), 96–99 (MYNF), and 140–143 (SRGG) each bind FMN.

It belongs to the azoreductase type 1 family. Homodimer. It depends on FMN as a cofactor.

The enzyme catalyses 2 a quinone + NADH + H(+) = 2 a 1,4-benzosemiquinone + NAD(+). It carries out the reaction N,N-dimethyl-1,4-phenylenediamine + anthranilate + 2 NAD(+) = 2-(4-dimethylaminophenyl)diazenylbenzoate + 2 NADH + 2 H(+). Its function is as follows. Quinone reductase that provides resistance to thiol-specific stress caused by electrophilic quinones. In terms of biological role, also exhibits azoreductase activity. Catalyzes the reductive cleavage of the azo bond in aromatic azo compounds to the corresponding amines. The sequence is that of FMN-dependent NADH:quinone oxidoreductase 2 from Xanthomonas euvesicatoria pv. vesicatoria (strain 85-10) (Xanthomonas campestris pv. vesicatoria).